A 278-amino-acid polypeptide reads, in one-letter code: Hydroxyethylthiazole kinase (278 aa).

Methionine 51 provides a ligand contact to substrate. ATP-binding residues include arginine 127 and serine 173. Glycine 201 contacts substrate.

This sequence belongs to the Thz kinase family. Mg(2+) is required as a cofactor.

The catalysed reaction is 5-(2-hydroxyethyl)-4-methylthiazole + ATP = 4-methyl-5-(2-phosphooxyethyl)-thiazole + ADP + H(+). The protein operates within cofactor biosynthesis; thiamine diphosphate biosynthesis; 4-methyl-5-(2-phosphoethyl)-thiazole from 5-(2-hydroxyethyl)-4-methylthiazole: step 1/1. Functionally, catalyzes the phosphorylation of the hydroxyl group of 4-methyl-5-beta-hydroxyethylthiazole (THZ). This is Hydroxyethylthiazole kinase from Leptothrix cholodnii (strain ATCC 51168 / LMG 8142 / SP-6) (Leptothrix discophora (strain SP-6)).